The chain runs to 1040 residues: uncharacterized protein (1040 aa).

The Helicase ATP-binding domain occupies 403–588 (RLEESSKKGG…YSLIKFLRIK (186 aa)). Residue 416–423 (DDMGLGKT) coordinates ATP. An RING-type zinc finger spans residues 746–798 (CSLCMDVVAELLIIVPCGHFLCRECLTHVITSSEDMAKQTSNENISPKCSVCE). Positions 866–1032 (KIEKALNAVK…ISRLNTKELS (167 aa)) constitute a Helicase C-terminal domain.

Belongs to the SNF2/RAD54 helicase family.

Its subcellular location is the nucleus. This is an uncharacterized protein from Schizosaccharomyces pombe (strain 972 / ATCC 24843) (Fission yeast).